The chain runs to 338 residues: Ketol-acid reductoisomerase (NADP(+)) (338 aa).

The region spanning 1–181 (MRVFYDKDCD…GGGRTGIIET (181 aa)) is the KARI N-terminal Rossmann domain. NADP(+) is bound by residues 24–27 (YGSQ), Arg-47, Ser-50, Thr-52, and 82–85 (DEFQ). Residue His-107 is part of the active site. Gly-133 contributes to the NADP(+) binding site. Residues 182 to 327 (TFKDETETDL…EKLRAMMPWI (146 aa)) enclose the KARI C-terminal knotted domain. 4 residues coordinate Mg(2+): Asp-190, Glu-194, Glu-226, and Glu-230. Substrate is bound at residue Ser-251.

The protein belongs to the ketol-acid reductoisomerase family. Mg(2+) is required as a cofactor.

The catalysed reaction is (2R)-2,3-dihydroxy-3-methylbutanoate + NADP(+) = (2S)-2-acetolactate + NADPH + H(+). The enzyme catalyses (2R,3R)-2,3-dihydroxy-3-methylpentanoate + NADP(+) = (S)-2-ethyl-2-hydroxy-3-oxobutanoate + NADPH + H(+). Its pathway is amino-acid biosynthesis; L-isoleucine biosynthesis; L-isoleucine from 2-oxobutanoate: step 2/4. It participates in amino-acid biosynthesis; L-valine biosynthesis; L-valine from pyruvate: step 2/4. In terms of biological role, involved in the biosynthesis of branched-chain amino acids (BCAA). Catalyzes an alkyl-migration followed by a ketol-acid reduction of (S)-2-acetolactate (S2AL) to yield (R)-2,3-dihydroxy-isovalerate. In the isomerase reaction, S2AL is rearranged via a Mg-dependent methyl migration to produce 3-hydroxy-3-methyl-2-ketobutyrate (HMKB). In the reductase reaction, this 2-ketoacid undergoes a metal-dependent reduction by NADPH to yield (R)-2,3-dihydroxy-isovalerate. This is Ketol-acid reductoisomerase (NADP(+)) from Pseudomonas aeruginosa (strain LESB58).